Here is a 189-residue protein sequence, read N- to C-terminus: Probable nicotinate-nucleotide adenylyltransferase (189 aa).

This sequence belongs to the NadD family.

It catalyses the reaction nicotinate beta-D-ribonucleotide + ATP + H(+) = deamido-NAD(+) + diphosphate. The protein operates within cofactor biosynthesis; NAD(+) biosynthesis; deamido-NAD(+) from nicotinate D-ribonucleotide: step 1/1. Catalyzes the reversible adenylation of nicotinate mononucleotide (NaMN) to nicotinic acid adenine dinucleotide (NaAD). The chain is Probable nicotinate-nucleotide adenylyltransferase from Hydrogenobaculum sp. (strain Y04AAS1).